A 309-amino-acid polypeptide reads, in one-letter code: MTTPRWRLILNGKSAGNDELRDAVGHWRGQGVQLEVRVTWEDGDAERYVAEAIDHGVDVIVAAGGDGTLSAVAETLAHREELADALPSLALIPMGTANDFATAAGIPTEPKEAFALIGQATPHAIDLLRVDADGTQWWCANLASGGFGTQVTVETDAGLKKMLGGLAYVITGIAKLGRIEPITARLSGPDFAWEGDFIALGIGNGRQAGGGQQLCPQALIDDGLLDVTVLPELEGEVTATLGQMLKSGTQAALEQLATRARLPWLEIASERPLTLNLDGEPVQARQFRIECVPGRVRMHLPAGCPLLGG.

One can recognise a DAGKc domain in the interval 1 to 134 (MTTPRWRLIL…IDLLRVDADG (134 aa)). ATP is bound by residues T39, 65–71 (GDGTLSA), and T96. Positions 219, 222, and 224 each coordinate Mg(2+). Residue E280 is the Proton acceptor of the active site.

Belongs to the diacylglycerol/lipid kinase family. YegS lipid kinase subfamily. The cofactor is Mg(2+). Ca(2+) is required as a cofactor.

It is found in the cytoplasm. Probably phosphorylates lipids; the in vivo substrate is unknown. This Stenotrophomonas maltophilia (strain K279a) protein is Probable lipid kinase YegS-like.